Reading from the N-terminus, the 367-residue chain is Regulator of fusion ref-1 (367 aa).

Residues 1–10 show a composition bias toward pro residues; sequence MVLISTPPPA. Residues 1–24 are disordered; that stretch reads MVLISTPPPAYAHNRKTSQEKKRR. The basic motif 1 stretch occupies residues 11-24; sequence YAHNRKTSQEKKRR. The 53-residue stretch at 11–63 folds into the bHLH 1 domain; the sequence is YAHNRKTSQEKKRRDEINAKIKELQLLIQNESDNEKMTQGDVLNRAVEVVSRM. The tract at residues 25–63 is helix-loop-helix motif 1; that stretch reads DEINAKIKELQLLIQNESDNEKMTQGDVLNRAVEVVSRM. Disordered regions lie at residues 133 to 177 and 313 to 367; these read RSES…RRDR and ATSP…RPWE. Positions 141–157 are enriched in low complexity; that stretch reads SSMSYRSQSSSPSTSES. Residues 161–177 show a composition bias toward basic and acidic residues; the sequence is IDRKEVKKNREQDRRDR. A basic motif 2 region spans residues 162 to 175; it reads DRKEVKKNREQDRR. The bHLH 2 domain maps to 162 to 219; that stretch reads DRKEVKKNREQDRRDRQGEAFDALKNFIIENKLMTSHQVEKMQRLNTLDIIIAYIQNK. The segment at 176-219 is helix-loop-helix motif 2; it reads DRQGEAFDALKNFIIENKLMTSHQVEKMQRLNTLDIIIAYIQNK. Over residues 313 to 354 the composition is skewed to low complexity; it reads ATSPKSQQSPSYSLDSPPPSSDTSSSSIETPSTPNENSNSNP. The segment covering 356-367 has biased composition (basic residues); that stretch reads ASRKSKLFRPWE.

Interacts with unc-37.

The protein localises to the nucleus. Probable transcription factor. Binds 5'-TGCCACGTGTCCA-3' in vitro, probably via the E-box motif 5'-CA[TC][AG]TG-3'. Acts in embryonic development in a Notch-dependent manner, perhaps as a direct target of transcriptional regulator lag-1 in the Notch signaling pathway. Also acts in embryonic development in a Notch-independent manner. Plays a role in both Notch-dependent and -independent pathways in the execution of neuronal lineage decisions in the embryo. Also involved in regulating cell fate leading to formation of neuronal structures known as postdeirids. Involved in the pattern of cell fusion with a large syncytium known as hyp-7, during larval development, in hermaphrodites. Plays a role in regulating the activity of homeobox protein mab-5 in Pn.p cells. The sequence is that of Regulator of fusion ref-1 from Caenorhabditis elegans.